Consider the following 2664-residue polypeptide: Non-reducing polyketide synthase sorB (2664 aa).

The tract at residues 21–45 (KSAPQSGNTADDIPNAASQPDTTST) is disordered. Over residues 36-45 (AASQPDTTST) the composition is skewed to polar residues. The interval 112-281 (ADHARRLAEW…TTPSRIASDL (170 aa)) is N-terminal acylcarrier protein transacylase domain (SAT). Cysteine 184 acts as the Nucleophile; for transacylase activity in catalysis. Histidine 302 serves as the catalytic Proton donor/acceptor; for transacylase activity. The Ketosynthase family 3 (KS3) domain maps to 428–849 (DNDIAVIGMS…GSNASMVIKQ (422 aa)). Catalysis depends on for beta-ketoacyl synthase activity residues cysteine 596, histidine 731, and histidine 772. Positions 961–1276 (CFGGQVSKSV…TQGTRQLADV (316 aa)) are malonyl-CoA:ACP transacylase (MAT) domain. The tract at residues 1345–1477 (PGLYTFMGYG…GQLEFHRADD (133 aa)) is N-terminal hotdog fold. One can recognise a PKS/mFAS DH domain in the interval 1345–1663 (PGLYTFMGYG…FSARSMSELF (319 aa)). A product template (PT) domain region spans residues 1376 to 1548 (VSGYTLGKTV…PSESAGRAVK (173 aa)). Residues 1507–1663 (DEVIQGQSIY…FSARSMSELF (157 aa)) are C-terminal hotdog fold. Residues 1711 to 1785 (TELWAKLLPV…GILAFLQSTL (75 aa)) enclose the Carrier domain. Position 1745 is an O-(pantetheine 4'-phosphoryl)serine (serine 1745). Positions 1789 to 1820 (GEDDASQSSDAASSSRNTPPSSNDGILATPSP) are disordered. Over residues 1794-1803 (SQSSDAASSS) the composition is skewed to low complexity. Residues 2015 to 2197 (FQLMADFLSR…DAGYKHVEWT (183 aa)) are methyltransferase domain. Positions 2281–2526 (VTGTTGSLGS…TLRSFPAVEG (246 aa)) are NADPH-binding (R) domain.

Pantetheine 4'-phosphate is required as a cofactor.

It participates in secondary metabolite biosynthesis. Non-reducing polyketide synthase; part of the gene cluster that mediates the biosynthesis of sorbicillinoids, a diverse group of yellow secondary metabolites that restrict growth of competing pathogenic fungi but not of bacteria. Sorbicillinoids biosynthesis requires the action of two PKSs. SorA iteratively combines three acetyl units and the growing chain is modified by the ketoacyl reductase subunit, and optional by the enoyl reductase subunit in the second cycle. The polyketide is then handed over to the PKS SorB, which adds three more acetyl units, and two methyl groups. SorB releases an aldehyde, which undergoes spontaneous cyclization resulting in the formation of sorbicillin or 2',3'-dihydrosorbicillin. The monooxygenase sorC oxidizes sorbicillin and 2',3'-dihydrosorbicillin to 2',3'-dihydrosorbicillinol and sorbicillinol, respectively. The oxidoreductase sorD further converts sorbicillinol into oxosorbicillinol. Sorbicillinol is the building block for the other sorbicillinoids such as disorbicillinol, bisvertinolon, and dihydrobisvertinolone. This Penicillium rubens (strain ATCC 28089 / DSM 1075 / NRRL 1951 / Wisconsin 54-1255) (Penicillium chrysogenum) protein is Non-reducing polyketide synthase sorB.